The following is a 142-amino-acid chain: Ribosomal RNA large subunit methyltransferase H (142 aa).

An S-adenosyl-L-methionine-binding site is contributed by Gly-89.

This sequence belongs to the RNA methyltransferase RlmH family. Homodimer.

It localises to the cytoplasm. The enzyme catalyses pseudouridine(1915) in 23S rRNA + S-adenosyl-L-methionine = N(3)-methylpseudouridine(1915) in 23S rRNA + S-adenosyl-L-homocysteine + H(+). In terms of biological role, specifically methylates the pseudouridine at position 1915 (m3Psi1915) in 23S rRNA. This is Ribosomal RNA large subunit methyltransferase H from Zymomonas mobilis subsp. mobilis (strain ATCC 31821 / ZM4 / CP4).